The sequence spans 423 residues: Gamma-glutamyl phosphate reductase (423 aa).

It belongs to the gamma-glutamyl phosphate reductase family.

The protein resides in the cytoplasm. The catalysed reaction is L-glutamate 5-semialdehyde + phosphate + NADP(+) = L-glutamyl 5-phosphate + NADPH + H(+). Its pathway is amino-acid biosynthesis; L-proline biosynthesis; L-glutamate 5-semialdehyde from L-glutamate: step 2/2. Its function is as follows. Catalyzes the NADPH-dependent reduction of L-glutamate 5-phosphate into L-glutamate 5-semialdehyde and phosphate. The product spontaneously undergoes cyclization to form 1-pyrroline-5-carboxylate. The chain is Gamma-glutamyl phosphate reductase from Pseudomonas entomophila (strain L48).